The sequence spans 583 residues: Putative glutaminase 3 (583 aa).

The tract at residues 1 to 29 is disordered; sequence MDNKEKEDEELSDELKDQPGPSEKPRTPT. Substrate contacts are provided by Ser-216, Asn-265, Glu-311, Asn-318, Tyr-344, Tyr-396, and Val-414. 3 ANK repeats span residues 482 to 514, 515 to 548, and 549 to 581; these read DGQN…CKDY, DDRT…PCDR, and YDRT…LKGQ.

Belongs to the glutaminase family.

It catalyses the reaction L-glutamine + H2O = L-glutamate + NH4(+). The protein is Putative glutaminase 3 (glna-3) of Caenorhabditis elegans.